The following is a 309-amino-acid chain: Homoserine kinase (309 aa).

Residue 91-101 (PIGSGLGSSAC) coordinates ATP.

Belongs to the GHMP kinase family. Homoserine kinase subfamily.

It is found in the cytoplasm. It catalyses the reaction L-homoserine + ATP = O-phospho-L-homoserine + ADP + H(+). It functions in the pathway amino-acid biosynthesis; L-threonine biosynthesis; L-threonine from L-aspartate: step 4/5. Functionally, catalyzes the ATP-dependent phosphorylation of L-homoserine to L-homoserine phosphate. This is Homoserine kinase from Erwinia tasmaniensis (strain DSM 17950 / CFBP 7177 / CIP 109463 / NCPPB 4357 / Et1/99).